The chain runs to 296 residues: Ribosomal RNA small subunit methyltransferase H (296 aa).

Residues 30–32, aspartate 49, phenylalanine 77, aspartate 95, and glutamine 102 contribute to the S-adenosyl-L-methionine site; that span reads GGH.

This sequence belongs to the methyltransferase superfamily. RsmH family.

It localises to the cytoplasm. The enzyme catalyses cytidine(1402) in 16S rRNA + S-adenosyl-L-methionine = N(4)-methylcytidine(1402) in 16S rRNA + S-adenosyl-L-homocysteine + H(+). Its function is as follows. Specifically methylates the N4 position of cytidine in position 1402 (C1402) of 16S rRNA. This is Ribosomal RNA small subunit methyltransferase H from Hydrogenobaculum sp. (strain Y04AAS1).